The sequence spans 86 residues: Small ribosomal subunit protein eS21 (86 aa).

Belongs to the eukaryotic ribosomal protein eS21 family. As to quaternary structure, component of the 40S small ribosomal subunit.

It is found in the cytoplasm. It localises to the cytosol. The protein resides in the rough endoplasmic reticulum. The protein is Small ribosomal subunit protein eS21 (RPS21) of Suberites domuncula (Sponge).